Reading from the N-terminus, the 402-residue chain is Leucine aminopeptidase 1 (402 aa).

The signal sequence occupies residues 1 to 18 (MKISNASLLALLLPAASA). A propeptide spanning residues 19–92 (RFVEQAEQNR…GTFNKRPYKK (74 aa)) is cleaved from the precursor. Residues Asn-111 and Asn-184 are each glycosylated (N-linked (GlcNAc...) asparagine). 4 residues coordinate Zn(2+): His-192, Asp-211, Glu-250, and Asp-277. N-linked (GlcNAc...) asparagine glycosylation is present at Asn-304. A disulfide bond links Cys-326 and Cys-330. Residue His-359 participates in Zn(2+) binding.

It belongs to the peptidase M28 family. M28E subfamily. As to quaternary structure, monomer. The cofactor is Zn(2+).

Its subcellular location is the secreted. Extracellular aminopeptidase that allows assimilation of proteinaceous substrates. This is Leucine aminopeptidase 1 (lap1) from Neurospora crassa (strain ATCC 24698 / 74-OR23-1A / CBS 708.71 / DSM 1257 / FGSC 987).